We begin with the raw amino-acid sequence, 344 residues long: Neurotrimin (344 aa).

Residues 1–33 (MGVCGYLFLPWKCLVVVSLRLLFLVPTGVPVRS) form the signal peptide. 3 consecutive Ig-like C2-type domains span residues 39 to 126 (PKAM…PKTS), 136 to 218 (PKIV…VKVT), and 222 to 309 (PPYI…ASIM). N44, N70, and N152 each carry an N-linked (GlcNAc...) asparagine glycan. A disulfide bridge connects residues C57 and C115. Intrachain disulfides connect C157–C201 and C243–C295. N284, N292, and N305 each carry an N-linked (GlcNAc...) asparagine glycan. Residue N321 is the site of GPI-anchor amidated asparagine; alternate attachment. N-linked (GlcNAc...) asparagine; alternate glycosylation occurs at N321. The propeptide at 322–344 (GTSRRAGCIWLLPLLVLHLLLKF) is removed in mature form.

It belongs to the immunoglobulin superfamily. IgLON family.

It is found in the cell membrane. Its function is as follows. Neural cell adhesion molecule. This Mus musculus (Mouse) protein is Neurotrimin (Ntm).